The following is a 146-amino-acid chain: Hemoglobin subunit beta-2 (146 aa).

Positions 2 to 146 constitute a Globin domain; it reads HWTAEEKQLI…VAHALARRYH (145 aa). Residues His63 and His92 each contribute to the heme b site.

This sequence belongs to the globin family. Heterotetramer of two alpha chains and two beta chains. Red blood cells.

Functionally, involved in oxygen transport from the lung to the various peripheral tissues. The polypeptide is Hemoglobin subunit beta-2 (Iguana iguana (Common iguana)).